The primary structure comprises 555 residues: Aerobic glycerol-3-phosphate dehydrogenase (555 aa).

24–52 serves as a coordination point for FAD; it reads DLFIIGGGITGAGTALDAASRGMKVALSE.

Belongs to the FAD-dependent glycerol-3-phosphate dehydrogenase family. FAD is required as a cofactor.

The protein localises to the cytoplasm. It catalyses the reaction a quinone + sn-glycerol 3-phosphate = dihydroxyacetone phosphate + a quinol. It participates in polyol metabolism; glycerol degradation via glycerol kinase pathway; glycerone phosphate from sn-glycerol 3-phosphate (aerobic route): step 1/1. The chain is Aerobic glycerol-3-phosphate dehydrogenase (glpD) from Bacillus subtilis (strain 168).